The primary structure comprises 806 residues: G-type lectin S-receptor-like serine/threonine-protein kinase At1g61430 (806 aa).

Residues 1 to 24 (MGKKRIVFFAYLPFFTIFMSFSFA) form the signal peptide. The Bulb-type lectin domain maps to 25–144 (GITKESPFSI…VSGRTLWQSF (120 aa)). Residues 25 to 425 (GITKESPFSI…ELDVNKRKMT (401 aa)) lie on the Extracellular side of the membrane. N-linked (GlcNAc...) asparagine glycosylation is found at Asn53, Asn94, Asn117, and Asn236. One can recognise an EGF-like domain in the interval 277–313 (PANSCDIYGVCGPFGLCVVSIPPKCKCFKGFVPKFAK). Disulfide bonds link Cys281–Cys293 and Cys287–Cys301. 3 N-linked (GlcNAc...) asparagine glycosylation sites follow: Asn319, Asn335, and Asn374. One can recognise a PAN domain in the interval 332–414 (CQGNSSGKDA…GELLSIRLAR (83 aa)). 2 cysteine pairs are disulfide-bonded: Cys367–Cys388 and Cys371–Cys377. Residues 426 to 446 (IVASTVSLTLFVIFGFAAFGF) traverse the membrane as a helical segment. The Cytoplasmic segment spans residues 447-806 (WRCRVEHNAH…EMTESVIQGR (360 aa)). In terms of domain architecture, Protein kinase spans 489 to 777 (FSLSNKLGPG…DLPLPKKPTF (289 aa)). ATP is bound by residues 495–503 (LGPGGFGSV) and Lys520. A phosphoserine mark is found at Ser526 and Ser541. Residues 581–598 (RKKLELDWPKRFEIIEGI) form a caM-binding region. Asp617 (proton acceptor) is an active-site residue. Phosphoserine occurs at positions 621 and 634. The residue at position 651 (Thr651) is a Phosphothreonine. Residues Ser694, Ser695, and Ser788 each carry the phosphoserine modification.

The protein belongs to the protein kinase superfamily. Ser/Thr protein kinase family.

The protein resides in the cell membrane. The enzyme catalyses L-seryl-[protein] + ATP = O-phospho-L-seryl-[protein] + ADP + H(+). It carries out the reaction L-threonyl-[protein] + ATP = O-phospho-L-threonyl-[protein] + ADP + H(+). This is G-type lectin S-receptor-like serine/threonine-protein kinase At1g61430 from Arabidopsis thaliana (Mouse-ear cress).